A 95-amino-acid polypeptide reads, in one-letter code: Pyrimidine/purine nucleoside phosphorylase (95 aa).

The protein belongs to the nucleoside phosphorylase PpnP family.

It catalyses the reaction a purine D-ribonucleoside + phosphate = a purine nucleobase + alpha-D-ribose 1-phosphate. The enzyme catalyses adenosine + phosphate = alpha-D-ribose 1-phosphate + adenine. It carries out the reaction cytidine + phosphate = cytosine + alpha-D-ribose 1-phosphate. The catalysed reaction is guanosine + phosphate = alpha-D-ribose 1-phosphate + guanine. It catalyses the reaction inosine + phosphate = alpha-D-ribose 1-phosphate + hypoxanthine. The enzyme catalyses thymidine + phosphate = 2-deoxy-alpha-D-ribose 1-phosphate + thymine. It carries out the reaction uridine + phosphate = alpha-D-ribose 1-phosphate + uracil. The catalysed reaction is xanthosine + phosphate = alpha-D-ribose 1-phosphate + xanthine. Its function is as follows. Catalyzes the phosphorolysis of diverse nucleosides, yielding D-ribose 1-phosphate and the respective free bases. Can use uridine, adenosine, guanosine, cytidine, thymidine, inosine and xanthosine as substrates. Also catalyzes the reverse reactions. In Vibrio cholerae serotype O1 (strain ATCC 39315 / El Tor Inaba N16961), this protein is Pyrimidine/purine nucleoside phosphorylase.